The sequence spans 580 residues: uncharacterized protein (580 aa).

This is an uncharacterized protein from Methanocaldococcus jannaschii (strain ATCC 43067 / DSM 2661 / JAL-1 / JCM 10045 / NBRC 100440) (Methanococcus jannaschii).